Reading from the N-terminus, the 574-residue chain is Proline--tRNA ligase (574 aa).

Belongs to the class-II aminoacyl-tRNA synthetase family. ProS type 1 subfamily. As to quaternary structure, homodimer.

The protein localises to the cytoplasm. It carries out the reaction tRNA(Pro) + L-proline + ATP = L-prolyl-tRNA(Pro) + AMP + diphosphate. Functionally, catalyzes the attachment of proline to tRNA(Pro) in a two-step reaction: proline is first activated by ATP to form Pro-AMP and then transferred to the acceptor end of tRNA(Pro). As ProRS can inadvertently accommodate and process non-cognate amino acids such as alanine and cysteine, to avoid such errors it has two additional distinct editing activities against alanine. One activity is designated as 'pretransfer' editing and involves the tRNA(Pro)-independent hydrolysis of activated Ala-AMP. The other activity is designated 'posttransfer' editing and involves deacylation of mischarged Ala-tRNA(Pro). The misacylated Cys-tRNA(Pro) is not edited by ProRS. This Pseudoalteromonas translucida (strain TAC 125) protein is Proline--tRNA ligase.